The following is a 237-amino-acid chain: NAD-dependent protein deacylase (237 aa).

Positions 1–235 (MRVAVLSGAG…PGLLERLPAL (235 aa)) constitute a Deacetylase sirtuin-type domain. 8–28 (GAGISAESGVPTFRDDKNGLW) contacts NAD(+). 2 residues coordinate substrate: tyrosine 53 and arginine 56. Residue 86-89 (QNVD) coordinates NAD(+). The active-site Proton acceptor is the histidine 104. Residues cysteine 112, cysteine 115, cysteine 138, and cysteine 140 each contribute to the Zn(2+) site. NAD(+)-binding positions include 177-179 (GTS), 203-205 (NPE), and alanine 221.

The protein belongs to the sirtuin family. Class III subfamily. The cofactor is Zn(2+).

It is found in the cytoplasm. It carries out the reaction N(6)-acetyl-L-lysyl-[protein] + NAD(+) + H2O = 2''-O-acetyl-ADP-D-ribose + nicotinamide + L-lysyl-[protein]. The enzyme catalyses N(6)-succinyl-L-lysyl-[protein] + NAD(+) + H2O = 2''-O-succinyl-ADP-D-ribose + nicotinamide + L-lysyl-[protein]. Functionally, NAD-dependent lysine deacetylase and desuccinylase that specifically removes acetyl and succinyl groups on target proteins. Modulates the activities of several proteins which are inactive in their acylated form. This chain is NAD-dependent protein deacylase, found in Mycobacterium bovis (strain ATCC BAA-935 / AF2122/97).